The primary structure comprises 103 residues: Small ribosomal subunit protein uS10 (103 aa).

It belongs to the universal ribosomal protein uS10 family. In terms of assembly, part of the 30S ribosomal subunit.

Involved in the binding of tRNA to the ribosomes. This Persephonella marina (strain DSM 14350 / EX-H1) protein is Small ribosomal subunit protein uS10.